A 422-amino-acid polypeptide reads, in one-letter code: Protein phosphatase 1 regulatory subunit 36 (422 aa).

In terms of assembly, interacts with PPP1CA.

Its function is as follows. Inhibits phosphatase activity of protein phosphatase 1 (PP1) complexes. The sequence is that of Protein phosphatase 1 regulatory subunit 36 (PPP1R36) from Homo sapiens (Human).